We begin with the raw amino-acid sequence, 355 residues long: MNPIRKIIHIDMDCFYAAIEMRDFPELANKPIAVGGDAKHRGVIATCNYAARQFGIRSAMPTAHALKLCRELILRPVRMDVYQKESQYIRSLLTEYTDLIEPLSLDEAYLDVTESTQCQGSATWIAEEIRARIYQTRQLTASAGIAPNKSLAKIASDWHKPNGQMVIRPEDVSAFVLDLPVRKLFGVGPKMEEKLGALNIKTCADLQRYSIEYLLQKFGTMGQRLYELARGIDNRPVNPERIRKSISVEETYPKDLPNSEACLAVLPDLMARLEARIQRAGKISGIHNLFVKLKFNDFQQTTIERVMDKIDLIVLRQLIQEGFARRGMPVRLLGIGIKLKQENTYQSVQLPLLDL.

The region spanning 7 to 188 (IIHIDMDCFY…LPVRKLFGVG (182 aa)) is the UmuC domain. Mg(2+)-binding residues include D11 and D106. Residue E107 is part of the active site.

It belongs to the DNA polymerase type-Y family. As to quaternary structure, monomer. Mg(2+) serves as cofactor.

It is found in the cytoplasm. The catalysed reaction is DNA(n) + a 2'-deoxyribonucleoside 5'-triphosphate = DNA(n+1) + diphosphate. Its function is as follows. Poorly processive, error-prone DNA polymerase involved in untargeted mutagenesis. Copies undamaged DNA at stalled replication forks, which arise in vivo from mismatched or misaligned primer ends. These misaligned primers can be extended by PolIV. Exhibits no 3'-5' exonuclease (proofreading) activity. May be involved in translesional synthesis, in conjunction with the beta clamp from PolIII. In Legionella pneumophila (strain Lens), this protein is DNA polymerase IV.